The chain runs to 353 residues: Photosystem II protein D1 (353 aa).

An N-acetylthreonine modification is found at threonine 2. Phosphothreonine is present on threonine 2. 3 helical membrane passes run 29-46, 118-133, and 142-156; these read YIGW…TATS, HFLL…EWEL, and WIAV…AATA. Residue histidine 118 participates in chlorophyll a binding. Position 126 (tyrosine 126) interacts with pheophytin a. The [CaMn4O5] cluster site is built by aspartate 170 and glutamate 189. Residues 197–218 form a helical membrane-spanning segment; sequence FHMLGVAGVFGGSLFSAMHGSL. Histidine 198 is a chlorophyll a binding site. A quinone-binding positions include histidine 215 and 264-265; that span reads SF. Histidine 215 is a Fe cation binding site. Position 272 (histidine 272) interacts with Fe cation. The helical transmembrane segment at 274 to 288 threads the bilayer; that stretch reads FLAAWPVIGIWFTAL. 4 residues coordinate [CaMn4O5] cluster: histidine 332, glutamate 333, aspartate 342, and alanine 344. Positions 345–353 are excised as a propeptide; it reads AIEAPSTNG.

Belongs to the reaction center PufL/M/PsbA/D family. As to quaternary structure, PSII is composed of 1 copy each of membrane proteins PsbA, PsbB, PsbC, PsbD, PsbE, PsbF, PsbH, PsbI, PsbJ, PsbK, PsbL, PsbM, PsbT, PsbX, PsbY, PsbZ, Psb30/Ycf12, at least 3 peripheral proteins of the oxygen-evolving complex and a large number of cofactors. It forms dimeric complexes. It depends on The D1/D2 heterodimer binds P680, chlorophylls that are the primary electron donor of PSII, and subsequent electron acceptors. It shares a non-heme iron and each subunit binds pheophytin, quinone, additional chlorophylls, carotenoids and lipids. D1 provides most of the ligands for the Mn4-Ca-O5 cluster of the oxygen-evolving complex (OEC). There is also a Cl(-1) ion associated with D1 and D2, which is required for oxygen evolution. The PSII complex binds additional chlorophylls, carotenoids and specific lipids. as a cofactor. Post-translationally, tyr-161 forms a radical intermediate that is referred to as redox-active TyrZ, YZ or Y-Z. C-terminally processed by CTPA; processing is essential to allow assembly of the oxygen-evolving complex and thus photosynthetic growth.

It localises to the plastid. The protein resides in the chloroplast thylakoid membrane. The catalysed reaction is 2 a plastoquinone + 4 hnu + 2 H2O = 2 a plastoquinol + O2. Functionally, photosystem II (PSII) is a light-driven water:plastoquinone oxidoreductase that uses light energy to abstract electrons from H(2)O, generating O(2) and a proton gradient subsequently used for ATP formation. It consists of a core antenna complex that captures photons, and an electron transfer chain that converts photonic excitation into a charge separation. The D1/D2 (PsbA/PsbD) reaction center heterodimer binds P680, the primary electron donor of PSII as well as several subsequent electron acceptors. The protein is Photosystem II protein D1 of Amaranthus hybridus (Slim amaranth).